Reading from the N-terminus, the 390-residue chain is MKFVDEAVIRADAGDGGNGTVSFRTEKYVPRGGPDGGDGGDGGDVYLLADENVNTLIDFRFERFHAAERGENGRGGNCTGHRGEDKILTVPVGTRAIDEETGEVIADLTDHGVKVMVSKGGFHGLGNTRFKSSVNRAPRQKSMGSKGEIRHLRLELLLLADVGMLGLPNAGKSTFIRSVSAAKPKVADYPFTTLIPSLGVVRVDAERSFVIADIPGLIEGAADGAGLGIRFLKHLERCRVLLHMIDLLPADGSDPVENAFTIINELDKYSDKLANKPRWLIFNKVDLLSEEDTQAKISEVLEALAWEGDYYCISALTRDGTKELTYNLMTTIESLPQNKYDEIEEKVEKVEFKWDDYHAEQIKKAEEDDDDDDWDNWNEDDYDVEIIYKP.

The Obg domain maps to 1-159 (MKFVDEAVIR…RHLRLELLLL (159 aa)). The disordered stretch occupies residues 22–42 (SFRTEKYVPRGGPDGGDGGDG). Residues 33-42 (GPDGGDGGDG) show a composition bias toward gly residues. The OBG-type G domain maps to 160 to 333 (ADVGMLGLPN…LTYNLMTTIE (174 aa)). GTP-binding positions include 166-173 (GLPNAGKS), 191-195 (FTTLI), 213-216 (DIPG), 283-286 (NKVD), and 314-316 (SAL). The Mg(2+) site is built by S173 and T193.

This sequence belongs to the TRAFAC class OBG-HflX-like GTPase superfamily. OBG GTPase family. In terms of assembly, monomer. Requires Mg(2+) as cofactor.

It is found in the cytoplasm. Its function is as follows. An essential GTPase which binds GTP, GDP and possibly (p)ppGpp with moderate affinity, with high nucleotide exchange rates and a fairly low GTP hydrolysis rate. Plays a role in control of the cell cycle, stress response, ribosome biogenesis and in those bacteria that undergo differentiation, in morphogenesis control. In Photobacterium profundum (strain SS9), this protein is GTPase Obg.